Here is a 42-residue protein sequence, read N- to C-terminus: Potassium channel toxin gamma-KTx 1.10 (42 aa).

4 disulfides stabilise this stretch: Cys5–Cys23, Cys11–Cys34, Cys20–Cys39, and Cys24–Cys41.

Expressed by the venom gland.

Its subcellular location is the secreted. Blocks human Kv11.1/KCNH2/ERG1 potassium channels (reversible, IC(50)=3.4 nM). At high toxin concentrations, block of Kv11.1/KCNH2/ERG1 macroscopic current is almost complete. Does not accelerate the kinetics of the closing process and has no effect on the activation and inactivation kinetics of the Kv11.1/KCNH2/ERG1 channels. In Centruroides margaritatus (Central American bark Scorpion), this protein is Potassium channel toxin gamma-KTx 1.10.